Reading from the N-terminus, the 257-residue chain is 5-oxoprolinase subunit A (257 aa).

It belongs to the LamB/PxpA family. In terms of assembly, forms a complex composed of PxpA, PxpB and PxpC.

The catalysed reaction is 5-oxo-L-proline + ATP + 2 H2O = L-glutamate + ADP + phosphate + H(+). In terms of biological role, catalyzes the cleavage of 5-oxoproline to form L-glutamate coupled to the hydrolysis of ATP to ADP and inorganic phosphate. The chain is 5-oxoprolinase subunit A from Halalkalibacterium halodurans (strain ATCC BAA-125 / DSM 18197 / FERM 7344 / JCM 9153 / C-125) (Bacillus halodurans).